A 413-amino-acid polypeptide reads, in one-letter code: Histidinol-phosphate aminotransferase, chloroplastic (413 aa).

Residues 1–35 constitute a chloroplast transit peptide; the sequence is MGVIELCNTSSICIGRANPSCCSIERNQRRRIICM. Position 273 is an N6-(pyridoxal phosphate)lysine (K273).

This sequence belongs to the class-II pyridoxal-phosphate-dependent aminotransferase family. Histidinol-phosphate aminotransferase subfamily. As to quaternary structure, homodimer. Requires pyridoxal 5'-phosphate as cofactor. Expressed in flowers, leaves, stems and roots.

It is found in the plastid. The protein resides in the chloroplast. The catalysed reaction is L-histidinol phosphate + 2-oxoglutarate = 3-(imidazol-4-yl)-2-oxopropyl phosphate + L-glutamate. It functions in the pathway amino-acid biosynthesis; L-histidine biosynthesis; L-histidine from 5-phospho-alpha-D-ribose 1-diphosphate: step 7/9. This chain is Histidinol-phosphate aminotransferase, chloroplastic (HPA), found in Nicotiana plumbaginifolia (Leadwort-leaved tobacco).